Here is a 56-residue protein sequence, read N- to C-terminus: Genome polyprotein (56 aa).

The segment at 1–30 is disordered; the sequence is ETMLDRIASGDLESSVDDPRSAEDKRFESH. A compositionally biased stretch (basic and acidic residues) spans 17-30; it reads DDPRSAEDKRFESH.

The protein belongs to the picornaviridae polyprotein family. Homopentamer. Homooligomer. As to quaternary structure, interacts with capsid protein VP2. Interacts with capsid protein VP3. Post-translationally, specific enzymatic cleavages by viral protease in vivo yield a variety of precursors and mature proteins. Polyprotein processing intermediates are produced, such as P1-2A which is a functional precursor of the structural proteins, VP0 which is a VP4-VP2 precursor, VP1-2A precursor, 3ABC precursor which is a stable and catalytically active precursor of 3A, 3B and 3C proteins, 3AB and 3CD precursors. The assembly signal 2A is removed from VP1-2A by a host protease, possibly host Cathepsin L. This cleavage occurs over a region of 3 amino-acids probably generating VP1 proteins with heterogeneous C-termini. The assembly signal 2A is removed from VP1-2A by a host protease, possibly host Cathepsin L in naked virions. This cleavage does not occur in enveloped virions. This cleavage occurs over a region of 3 amino-acids probably generating VP1 proteins with heterogeneous C-termini.

It localises to the virion. It is found in the host endosome. Its subcellular location is the host multivesicular body. Capsid proteins VP1, VP2, and VP3 form a closed capsid enclosing the viral positive strand RNA genome. All these proteins contain a beta-sheet structure called beta-barrel jelly roll. Together they form an icosahedral capsid (T=3) composed of 60 copies of each VP1, VP2, and VP3, with a diameter of approximately 300 Angstroms. VP1 is situated at the 12 fivefold axes, whereas VP2 and VP3 are located at the quasi-sixfold axes. The naked capsid interacts with the host receptor HAVCR1 to provide virion attachment to and probably entry into the target cell. In terms of biological role, precursor component of immature procapsids that corresponds to an extended form of the structural protein VP1. After maturation, possibly by the host Cathepsin L, the assembly signal 2A is cleaved to give rise to the mature VP1 protein. The chain is Genome polyprotein from Callithrix (Owl-faced monkey).